The sequence spans 590 residues: Aspartate--tRNA(Asp/Asn) ligase (590 aa).

Glutamate 173 is a binding site for L-aspartate. An aspartate region spans residues 197-200; sequence QIFK. L-aspartate is bound at residue arginine 219. Residues 219–221 and glutamine 228 contribute to the ATP site; that span reads RDE. An L-aspartate-binding site is contributed by histidine 450. Residue glutamate 484 participates in ATP binding. Residue arginine 491 coordinates L-aspartate. 536–539 is a binding site for ATP; the sequence is GLDR.

This sequence belongs to the class-II aminoacyl-tRNA synthetase family. Type 1 subfamily. In terms of assembly, homodimer.

It localises to the cytoplasm. The enzyme catalyses tRNA(Asx) + L-aspartate + ATP = L-aspartyl-tRNA(Asx) + AMP + diphosphate. In terms of biological role, aspartyl-tRNA synthetase with relaxed tRNA specificity since it is able to aspartylate not only its cognate tRNA(Asp) but also tRNA(Asn). Reaction proceeds in two steps: L-aspartate is first activated by ATP to form Asp-AMP and then transferred to the acceptor end of tRNA(Asp/Asn). The protein is Aspartate--tRNA(Asp/Asn) ligase of Coxiella burnetii (strain Dugway 5J108-111).